The primary structure comprises 375 residues: Probable 1-acyl-sn-glycerol-3-phosphate acyltransferase 5 (375 aa).

2 helical membrane passes run 21–41 (IICLMVLVSTAFMMLIFWGFL) and 57–77 (CVSFFFGSWLALWPFLFEKIN). Residues 100–105 (HRTEVD) carry the HXXXXD motif motif. 2 helical membrane-spanning segments follow: residues 312-332 (YLINCLAVIAFTTICTHLTFF) and 337-357 (WFRIYVSLACVYLTSATHFNL).

Belongs to the 1-acyl-sn-glycerol-3-phosphate acyltransferase family. As to expression, widely expressed at low level.

Its subcellular location is the membrane. The enzyme catalyses a 1-acyl-sn-glycero-3-phosphate + an acyl-CoA = a 1,2-diacyl-sn-glycero-3-phosphate + CoA. Its pathway is phospholipid metabolism; CDP-diacylglycerol biosynthesis; CDP-diacylglycerol from sn-glycerol 3-phosphate: step 2/3. Functionally, may convert lysophosphatidic acid (LPA) into phosphatidic acid by incorporating acyl moiety at the 2 position. Has no activity when expressed in bacteria or yeast. The sequence is that of Probable 1-acyl-sn-glycerol-3-phosphate acyltransferase 5 (LPAT5) from Arabidopsis thaliana (Mouse-ear cress).